The sequence spans 107 residues: Essential MCU regulator, mitochondrial (107 aa).

A mitochondrion-targeting transit peptide spans methionine 1 to serine 47. Residues valine 48–phenylalanine 65 lie on the Mitochondrial matrix side of the membrane. Residues glycine 66–serine 85 traverse the membrane as a helical segment. The short motif at glycine 81 to serine 85 is the GXXXX[G/A/S] element. Residues lysine 86 to aspartate 107 are Mitochondrial intermembrane-facing.

This sequence belongs to the SMDT1/EMRE family. As to quaternary structure, component of the uniplex complex, composed of MCU, EMRE/SMDT1, MICU1 and MICU2 (or MICU3) in a 4:4:1:1 stoichiometry. The number of EMRE/SMDT1 molecules is hovewer variable, ranging from 1 to 4 copies per uniplex complex, leading to uniplex complexes with distinct gatekeeping profiles. Interacts (via its C-terminal poly-Asp tail) with MCUR1; the interaction is direct. Unprocessed form interacts (via transit peptide) with MAIP1. Undergoes proteolytic degradation in neurons: degraded by AFG3L2 and SPG7 before SMDT1/EMRE assembly with the uniporter complex, limiting the availability of SMDT1/EMRE for MCU assembly and promoting efficient assembly of gatekeeper subunits with MCU.

It is found in the mitochondrion inner membrane. Essential regulatory subunit of the mitochondrial calcium uniporter complex (uniplex), a complex that mediates calcium uptake into mitochondria. Required to bridge the calcium-sensing proteins MICU1 with the calcium-conducting subunit MCU. Acts by mediating activation of MCU and retention of MICU1 to the MCU pore, in order to ensure tight regulation of the uniplex complex and appropriate responses to intracellular calcium signaling. In Bos taurus (Bovine), this protein is Essential MCU regulator, mitochondrial.